The sequence spans 250 residues: Hemocyanin, units C and D (250 aa).

His-1 serves as a coordination point for Cu cation. The segment at 1-106 (HGSTKWCPSP…RAWIEPVTSA (106 aa)) is unit C. A disulfide bridge connects residues Cys-7 and Cys-18. Positions 19–21 (CHH) form a cross-link, 2'-(S-cysteinyl)-histidine (Cys-His). Residues His-21 and His-143 each contribute to the Cu cation site. Residues 107–250 (VRIRKNLNDL…DAQDVIYNNH (144 aa)) are unit D. A disulfide bridge connects residues Cys-149 and Cys-160. Residues 161–163 (CLH) constitute a cross-link (2'-(S-cysteinyl)-histidine (Cys-His)). His-172 contributes to the Cu cation binding site.

This sequence belongs to the tyrosinase family. Hemocyanin subfamily. In terms of assembly, decamers of large identical subunits (390 kDa), each containing 8 globular oxygen-binding functional units. Cu(2+) serves as cofactor.

Its function is as follows. Hemocyanins are copper-containing oxygen carriers occurring freely dissolved in the hemolymph of many mollusks and arthropods. In Sepia officinalis (Common cuttlefish), this protein is Hemocyanin, units C and D.